Reading from the N-terminus, the 301-residue chain is 4-hydroxy-tetrahydrodipicolinate synthase (301 aa).

Thr-50 is a binding site for pyruvate. The Proton donor/acceptor role is filled by Tyr-138. The active-site Schiff-base intermediate with substrate is Lys-167. Ile-209 contributes to the pyruvate binding site.

It belongs to the DapA family. As to quaternary structure, homotetramer; dimer of dimers.

The protein resides in the cytoplasm. The enzyme catalyses L-aspartate 4-semialdehyde + pyruvate = (2S,4S)-4-hydroxy-2,3,4,5-tetrahydrodipicolinate + H2O + H(+). It functions in the pathway amino-acid biosynthesis; L-lysine biosynthesis via DAP pathway; (S)-tetrahydrodipicolinate from L-aspartate: step 3/4. Catalyzes the condensation of (S)-aspartate-beta-semialdehyde [(S)-ASA] and pyruvate to 4-hydroxy-tetrahydrodipicolinate (HTPA). The protein is 4-hydroxy-tetrahydrodipicolinate synthase of Sorangium cellulosum (strain So ce56) (Polyangium cellulosum (strain So ce56)).